The following is a 115-amino-acid chain: MKKKHRIKKNDEFQAVFQKGKSNANRQFVVYQLDKEEQPNFRIGLSVSKKIGNAVVRNRIKRMVRQAITELKDEIDSGKDFVIIARKPCAEMTYEEVKKSLIHVFKRSGMKRIKK.

It belongs to the RnpA family. As to quaternary structure, consists of a catalytic RNA component (M1 or rnpB) and a protein subunit.

It carries out the reaction Endonucleolytic cleavage of RNA, removing 5'-extranucleotides from tRNA precursor.. Its function is as follows. RNaseP catalyzes the removal of the 5'-leader sequence from pre-tRNA to produce the mature 5'-terminus. It can also cleave other RNA substrates such as 4.5S RNA. The protein component plays an auxiliary but essential role in vivo by binding to the 5'-leader sequence and broadening the substrate specificity of the ribozyme. In Bacillus cereus (strain G9842), this protein is Ribonuclease P protein component.